The sequence spans 1402 residues: Eukaryotic translation initiation factor 4 gamma 1 (1402 aa).

Disordered regions lie at residues Met-1 to Pro-123 and His-165 to Lys-402. Phosphothreonine is present on residues Thr-11 and Thr-27. The span at Gly-53–Ser-64 shows a compositional bias: low complexity. The segment covering Ser-65–Leu-76 has biased composition (pro residues). Phosphoserine is present on Ser-120. A compositionally biased stretch (low complexity) spans Ala-238–Ala-251. Residues Gln-261–Glu-275 are compositionally biased toward acidic residues. 2 stretches are compositionally biased toward basic and acidic residues: residues Glu-280–Pro-290 and Lys-324–Lys-340. Positions Pro-359 to Ser-370 are enriched in low complexity. The span at Trp-379 to Asn-388 shows a compositional bias: basic and acidic residues. Thr-452 bears the Phosphothreonine mark. Disordered regions lie at residues Ala-476–Gly-517, Ala-536–Thr-563, Ser-600–Glu-636, and Met-828–Ala-1028. Over residues Gly-479 to Pro-488 the composition is skewed to low complexity. An omega-N-methylarginine mark is found at Arg-490 and Arg-499. The segment covering Thr-547 to Thr-563 has biased composition (basic and acidic residues). The region spanning Phe-567–Asn-793 is the MIF4G domain. A compositionally biased stretch (polar residues) spans Gly-602–Ser-621. Ser-832 bears the Phosphoserine mark. Residues Arg-836 and Arg-846 each carry the omega-N-methylarginine modification. A phosphoserine mark is found at Ser-881 and Ser-896. Residues Gly-892 to Ser-913 show a composition bias toward low complexity. Lys-899 is modified (N6-acetyllysine). The span at Pro-918–Ser-937 shows a compositional bias: polar residues. Ser-948 and Ser-950 each carry phosphoserine. Over residues Leu-949–Arg-981 the composition is skewed to basic and acidic residues. Position 988 is a phosphoserine; by PKC/PRKCA (Ser-988). Residues Phe-989–Ala-1028 are compositionally biased toward basic and acidic residues. 3 positions are modified to phosphoserine: Ser-990, Ser-997, and Ser-1012. Position 1014 is a phosphothreonine (Thr-1014). Residues Ser-1034 and Ser-1041 each carry the phosphoserine modification. The region spanning Glu-1044 to Thr-1166 is the MI domain. The region spanning Glu-1231–His-1401 is the W2 domain. Ser-1399 carries the post-translational modification Phosphoserine.

This sequence belongs to the eukaryotic initiation factor 4G family. In terms of assembly, eIF4F is a multi-subunit complex, the composition of which varies with external and internal environmental conditions. It is composed of at least EIF4A, EIF4E (cap-binding) and EIF4G1/EIF4G3. Interacts with eIF3 complex, mutually exclusive with EIF4A1 or EIF4A2, EIF4E and through its N-terminus with PABPC1. Interacts with EIF4E or with EIF1 (mutually exclusive) through a common binding site. Interacts through its C-terminus with the serine/threonine kinases MKNK1, and with MKNK2. Appears to act as a scaffold protein, holding these enzymes in place to phosphorylate EIF4E. Non-phosphorylated EIF4EBP1 competes with EIF4G1/EIF4G3 to interact with EIF4E; insulin stimulated MAP-kinase (MAPK1 and MAPK3) phosphorylation of EIF4EBP1 causes dissociation of the complex allowing EIF4G1/EIF4G3 to bind and consequent initiation of translation. EIF4G1/EIF4G3 interacts with PABPC1 to bring about circularization of the mRNA. Interacts with EIF4E3. Interacts with CIRBP and MIF4GD. Interacts with RBM4. Interacts with HNRNPD/AUF1; the interaction requires RNA. Interacts with DDX3X; the interaction requires RNA. Interacts with DAZAP2. In terms of processing, phosphorylated at multiple sites in vivo. Phosphorylation at Ser-988 by PRKCA induces binding to MKNK1.

It is found in the cytoplasm. The protein resides in the nucleus. It localises to the stress granule. Component of the protein complex eIF4F, which is involved in the recognition of the mRNA cap, ATP-dependent unwinding of 5'-terminal secondary structure and recruitment of mRNA to the ribosome. Exists in two complexes, either with EIF1 or with EIF4E (mutually exclusive). Together with EIF1, is required for leaky scanning, in particular for avoiding cap-proximal start codon. Together with EIF4E, antagonizes the scanning promoted by EIF1-EIF4G1 and locates the start codon (through a TISU element) without scanning. As a member of the eIF4F complex, required for endoplasmic reticulum stress-induced ATF4 mRNA translation. The chain is Eukaryotic translation initiation factor 4 gamma 1 (EIF4G1) from Oryctolagus cuniculus (Rabbit).